The primary structure comprises 231 residues: 2,3-bisphosphoglycerate-dependent phosphoglycerate mutase (231 aa).

Substrate is bound by residues 10-17 (RHGQSEWN), 23-24 (TG), Arg-62, 89-92 (ERHY), Lys-100, 116-117 (RR), and 185-186 (GN). His-11 (tele-phosphohistidine intermediate) is an active-site residue. Glu-89 acts as the Proton donor/acceptor in catalysis.

This sequence belongs to the phosphoglycerate mutase family. BPG-dependent PGAM subfamily. As to quaternary structure, homodimer.

The catalysed reaction is (2R)-2-phosphoglycerate = (2R)-3-phosphoglycerate. It functions in the pathway carbohydrate degradation; glycolysis; pyruvate from D-glyceraldehyde 3-phosphate: step 3/5. Its function is as follows. Catalyzes the interconversion of 2-phosphoglycerate and 3-phosphoglycerate. This Buchnera aphidicola subsp. Acyrthosiphon pisum (strain 5A) protein is 2,3-bisphosphoglycerate-dependent phosphoglycerate mutase.